The chain runs to 936 residues: Isoleucine--tRNA ligase (936 aa).

The 'HIGH' region motif lies at 58–68; sequence PYANGRAHLGT. E561 contributes to the L-isoleucyl-5'-AMP binding site. Residues 602-606 carry the 'KMSKS' region motif; it reads KMSKS. K605 contacts ATP. Zn(2+)-binding residues include C899, C902, C919, and C922.

Belongs to the class-I aminoacyl-tRNA synthetase family. IleS type 1 subfamily. In terms of assembly, monomer. Requires Zn(2+) as cofactor.

The protein resides in the cytoplasm. It carries out the reaction tRNA(Ile) + L-isoleucine + ATP = L-isoleucyl-tRNA(Ile) + AMP + diphosphate. Its function is as follows. Catalyzes the attachment of isoleucine to tRNA(Ile). As IleRS can inadvertently accommodate and process structurally similar amino acids such as valine, to avoid such errors it has two additional distinct tRNA(Ile)-dependent editing activities. One activity is designated as 'pretransfer' editing and involves the hydrolysis of activated Val-AMP. The other activity is designated 'posttransfer' editing and involves deacylation of mischarged Val-tRNA(Ile). In Coxiella burnetii (strain CbuK_Q154) (Coxiella burnetii (strain Q154)), this protein is Isoleucine--tRNA ligase.